Here is a 105-residue protein sequence, read N- to C-terminus: Small ribosomal subunit protein uS10 (105 aa).

The protein belongs to the universal ribosomal protein uS10 family. In terms of assembly, part of the 30S ribosomal subunit.

Functionally, involved in the binding of tRNA to the ribosomes. The sequence is that of Small ribosomal subunit protein uS10 from Francisella philomiragia subsp. philomiragia (strain ATCC 25017 / CCUG 19701 / FSC 153 / O#319-036).